A 130-amino-acid polypeptide reads, in one-letter code: Small ribosomal subunit protein uS11c (130 aa).

It belongs to the universal ribosomal protein uS11 family. As to quaternary structure, part of the 30S ribosomal subunit.

The protein localises to the plastid. Its subcellular location is the chloroplast. In Bigelowiella natans (Pedinomonas minutissima), this protein is Small ribosomal subunit protein uS11c.